Reading from the N-terminus, the 97-residue chain is Large ribosomal subunit protein uL30m (97 aa).

The protein belongs to the universal ribosomal protein uL30 family. In terms of assembly, component of the mitochondrial large ribosomal subunit (mt-LSU). Mature yeast 74S mitochondrial ribosomes consist of a small (37S) and a large (54S) subunit. The 37S small subunit contains a 15S ribosomal RNA (15S mt-rRNA) and at least 32 different proteins. The 54S large subunit contains a 21S rRNA (21S mt-rRNA) and at least 45 different proteins.

It localises to the mitochondrion. Its function is as follows. Component of the mitochondrial ribosome (mitoribosome), a dedicated translation machinery responsible for the synthesis of mitochondrial genome-encoded proteins, including at least some of the essential transmembrane subunits of the mitochondrial respiratory chain. The mitoribosomes are attached to the mitochondrial inner membrane and translation products are cotranslationally integrated into the membrane. The sequence is that of Large ribosomal subunit protein uL30m (mrpl33) from Schizosaccharomyces pombe (strain 972 / ATCC 24843) (Fission yeast).